A 350-amino-acid polypeptide reads, in one-letter code: THUMP domain-containing protein 1 (350 aa).

Residues 1–10 (MATTAQQSPQ) show a composition bias toward polar residues. Disordered regions lie at residues 1 to 42 (MATT…LEPG) and 75 to 96 (PEKFIDKDQQPSGSEGEDDDAE). Ala-2 carries the post-translational modification N-acetylalanine. 4 positions are modified to phosphoserine: Ser-8, Ser-86, Ser-88, and Ser-119. In terms of domain architecture, THUMP spans 147–254 (DMYKTKKKKT…KAVCCLSVVK (108 aa)). A Phosphoserine modification is found at Ser-270. The segment covering 270–292 (SAKDSQPHPKLGNGKEAKLEPDS) has biased composition (basic and acidic residues). The disordered stretch occupies residues 270–350 (SAKDSQPHPK…VPKTNENELS (81 aa)).

It belongs to the THUMPD1 family. As to quaternary structure, interacts with NAT10. Binds tRNA.

In terms of biological role, functions as a tRNA-binding adapter to mediate NAT10-dependent tRNA acetylation modifying cytidine to N4-acetylcytidine (ac4C). This chain is THUMP domain-containing protein 1 (Thumpd1), found in Mus musculus (Mouse).